Consider the following 465-residue polypeptide: 3-isopropylmalate dehydratase large subunit (465 aa).

The [4Fe-4S] cluster site is built by C347, C407, and C410. A disordered region spans residues 417–443; the sequence is TLKPGERSASTSNRNFEGRQGKGGRTH.

The protein belongs to the aconitase/IPM isomerase family. LeuC type 1 subfamily. As to quaternary structure, heterodimer of LeuC and LeuD. Requires [4Fe-4S] cluster as cofactor.

It catalyses the reaction (2R,3S)-3-isopropylmalate = (2S)-2-isopropylmalate. Its pathway is amino-acid biosynthesis; L-leucine biosynthesis; L-leucine from 3-methyl-2-oxobutanoate: step 2/4. Functionally, catalyzes the isomerization between 2-isopropylmalate and 3-isopropylmalate, via the formation of 2-isopropylmaleate. The polypeptide is 3-isopropylmalate dehydratase large subunit (Thermobifida fusca (strain YX)).